A 507-amino-acid polypeptide reads, in one-letter code: Nuclear distribution protein PAC1 (507 aa).

Positions 72–98 form a coiled coil; that stretch reads STVLRLQRKIMDLTDEVSNLKTIIEAK. WD repeat units follow at residues 125–164, 170–222, 225–265, 268–312, 315–389, 410–449, and 474–507; these read QTHQSVNTVAVHPYLPLIMAGCSDGTLSVWNIANDDPSIP, AHSR…QIRI, GHDH…CTRT, GHSD…GLCL, GHSH…VRPN, GHQSWVKTLQVHPNGRFIFSAGDDKSIRVWDLSTLATGGR, and PKDTTNEDILQDIESRMRCVFVSGGTDNTVRLWS.

Belongs to the WD repeat LIS1/nudF family. In terms of assembly, self-associates. Interacts with NDL1 and dynein.

The protein resides in the cytoplasm. It localises to the cytoskeleton. The protein localises to the spindle pole. Its function is as follows. Positively regulates the activity of the minus-end directed microtubule motor protein dynein. Plays a central role in positioning the mitotic spindle at the bud neck during cell division. Targets cytoplasmic dynein to microtubule plus ends, thereby promoting dynein-mediated microtubule sliding along the bud cortex and consequently the movement of the mitotic spindle to the bud neck. In Meyerozyma guilliermondii (strain ATCC 6260 / CBS 566 / DSM 6381 / JCM 1539 / NBRC 10279 / NRRL Y-324) (Yeast), this protein is Nuclear distribution protein PAC1.